The chain runs to 425 residues: Histidinol dehydrogenase (425 aa).

Substrate contacts are provided by Ser-231, Gln-253, and His-256. Zn(2+)-binding residues include Gln-253 and His-256. Catalysis depends on proton acceptor residues Glu-321 and His-322. Substrate is bound by residues His-322, Asp-355, Glu-409, and His-414. Residue Asp-355 participates in Zn(2+) binding. A Zn(2+)-binding site is contributed by His-414.

This sequence belongs to the histidinol dehydrogenase family. Zn(2+) is required as a cofactor.

The catalysed reaction is L-histidinol + 2 NAD(+) + H2O = L-histidine + 2 NADH + 3 H(+). Its pathway is amino-acid biosynthesis; L-histidine biosynthesis; L-histidine from 5-phospho-alpha-D-ribose 1-diphosphate: step 9/9. Functionally, catalyzes the sequential NAD-dependent oxidations of L-histidinol to L-histidinaldehyde and then to L-histidine. The chain is Histidinol dehydrogenase from Carboxydothermus hydrogenoformans (strain ATCC BAA-161 / DSM 6008 / Z-2901).